The sequence spans 204 residues: Holliday junction branch migration complex subunit RuvA (204 aa).

A domain I region spans residues 1 to 67 (MIAFLSGHLV…ETELVLYGFG (67 aa)). Residues 68-146 (SPAERDLFVE…HWRQGMGVAD (79 aa)) are domain II. Positions 147–157 (QPLAGGPPMPI) are flexible linker. Residues 157–204 (IREEVEMALLALGYSTQEIQAALQALPTHPRPTEDWLRDAITYLSQQP) are domain III.

This sequence belongs to the RuvA family. Homotetramer. Forms an RuvA(8)-RuvB(12)-Holliday junction (HJ) complex. HJ DNA is sandwiched between 2 RuvA tetramers; dsDNA enters through RuvA and exits via RuvB. An RuvB hexamer assembles on each DNA strand where it exits the tetramer. Each RuvB hexamer is contacted by two RuvA subunits (via domain III) on 2 adjacent RuvB subunits; this complex drives branch migration. In the full resolvosome a probable DNA-RuvA(4)-RuvB(12)-RuvC(2) complex forms which resolves the HJ.

It is found in the cytoplasm. In terms of biological role, the RuvA-RuvB-RuvC complex processes Holliday junction (HJ) DNA during genetic recombination and DNA repair, while the RuvA-RuvB complex plays an important role in the rescue of blocked DNA replication forks via replication fork reversal (RFR). RuvA specifically binds to HJ cruciform DNA, conferring on it an open structure. The RuvB hexamer acts as an ATP-dependent pump, pulling dsDNA into and through the RuvAB complex. HJ branch migration allows RuvC to scan DNA until it finds its consensus sequence, where it cleaves and resolves the cruciform DNA. The sequence is that of Holliday junction branch migration complex subunit RuvA from Synechococcus sp. (strain JA-2-3B'a(2-13)) (Cyanobacteria bacterium Yellowstone B-Prime).